A 158-amino-acid polypeptide reads, in one-letter code: Transcription elongation factor GreA (158 aa).

Positions 45-72 (AEYHAAREQQSFIEGRIKQLEGELSHAE) form a coiled coil.

The protein belongs to the GreA/GreB family.

Functionally, necessary for efficient RNA polymerase transcription elongation past template-encoded arresting sites. The arresting sites in DNA have the property of trapping a certain fraction of elongating RNA polymerases that pass through, resulting in locked ternary complexes. Cleavage of the nascent transcript by cleavage factors such as GreA or GreB allows the resumption of elongation from the new 3'terminus. GreA releases sequences of 2 to 3 nucleotides. This chain is Transcription elongation factor GreA, found in Xylella fastidiosa (strain 9a5c).